A 247-amino-acid polypeptide reads, in one-letter code: Triosephosphate isomerase (247 aa).

Positions 10 and 12 each coordinate substrate. H94 acts as the Electrophile in catalysis. E164 functions as the Proton acceptor in the catalytic mechanism.

It belongs to the triosephosphate isomerase family. As to quaternary structure, homodimer.

It localises to the cytoplasm. The enzyme catalyses D-glyceraldehyde 3-phosphate = dihydroxyacetone phosphate. It catalyses the reaction dihydroxyacetone phosphate = methylglyoxal + phosphate. It functions in the pathway carbohydrate biosynthesis; gluconeogenesis. The protein operates within carbohydrate degradation; glycolysis; D-glyceraldehyde 3-phosphate from glycerone phosphate: step 1/1. Triosephosphate isomerase is an extremely efficient metabolic enzyme that catalyzes the interconversion between dihydroxyacetone phosphate (DHAP) and D-glyceraldehyde-3-phosphate (G3P) in glycolysis and gluconeogenesis. Functionally, it is also responsible for the non-negligible production of methylglyoxal a reactive cytotoxic side-product that modifies and can alter proteins, DNA and lipids. The sequence is that of Triosephosphate isomerase (tpi-1) from Caenorhabditis elegans.